Reading from the N-terminus, the 704-residue chain is Polyribonucleotide nucleotidyltransferase (704 aa).

The Mg(2+) site is built by D486 and D492. In terms of domain architecture, KH spans 553-612 (PKIVIVKINPDKIRDVIGPGGKQINKIIEETGVKIDTEQDGTIYISSANEEMNARAKQII). In terms of domain architecture, S1 motif spans 622–690 (GEYYLSTVKR…KQGRVNLSRK (69 aa)).

It belongs to the polyribonucleotide nucleotidyltransferase family. The cofactor is Mg(2+).

Its subcellular location is the cytoplasm. The enzyme catalyses RNA(n+1) + phosphate = RNA(n) + a ribonucleoside 5'-diphosphate. Its function is as follows. Involved in mRNA degradation. Catalyzes the phosphorolysis of single-stranded polyribonucleotides processively in the 3'- to 5'-direction. The polypeptide is Polyribonucleotide nucleotidyltransferase (Lysinibacillus sphaericus (strain C3-41)).